Reading from the N-terminus, the 133-residue chain is Profilin-2 (133 aa).

Cys-13 and Cys-117 form a disulfide bridge. Positions Ala-83 to Thr-99 match the Involved in PIP2 interaction motif. Thr-113 carries the phosphothreonine modification.

Belongs to the profilin family. Occurs in many kinds of cells as a complex with monomeric actin in a 1:1 ratio. Post-translationally, phosphorylated by MAP kinases.

The protein resides in the cytoplasm. Its subcellular location is the cytoskeleton. In terms of biological role, binds to actin and affects the structure of the cytoskeleton. At high concentrations, profilin prevents the polymerization of actin, whereas it enhances it at low concentrations. The chain is Profilin-2 from Corylus avellana (European hazel).